We begin with the raw amino-acid sequence, 468 residues long: UDP-glucosyl transferase 74CD1 (468 aa).

Residue G20 coordinates UDP-alpha-D-glucose. H21 acts as the Proton acceptor in catalysis. Residue D114 is the Charge relay of the active site. S292, W344, Q347, H362, W365, N366, S367, E370, D386, and Q387 together coordinate UDP-alpha-D-glucose.

It belongs to the UDP-glycosyltransferase family. Mainly expressed in flowers, flower buds and young leaves, and, to a lesser extent, in old leaves, stems and roots.

Its pathway is secondary metabolite biosynthesis; terpenoid biosynthesis. Component of the oleanane-type triterpene saponins (e.g. saponarioside A and saponarioside B) biosynthetic pathway, leading to the production of natural products with detergent properties used as traditional sources of soap. A glycosyltransferase that, together with SDR1, mediates the conversion of QA-tri to QA-triF; UGT74CD1 may transfer 4-keto-6-deoxy-glucose to QA-tri, which is in turn reduced to D-fucose by SDR1, thus leading to QA-triF formation via the initiation of the C-28 sugar chain. The protein is UDP-glucosyl transferase 74CD1 of Saponaria officinalis (Common soapwort).